Here is a 322-residue protein sequence, read N- to C-terminus: Acetyl-coenzyme A carboxylase carboxyl transferase subunit alpha (322 aa).

A CoA carboxyltransferase C-terminal domain is found at 39 to 293 (RLAAKSQQLT…KRALAESLRQ (255 aa)).

It belongs to the AccA family. Acetyl-CoA carboxylase is a heterohexamer composed of biotin carboxyl carrier protein (AccB), biotin carboxylase (AccC) and two subunits each of ACCase subunit alpha (AccA) and ACCase subunit beta (AccD).

The protein resides in the cytoplasm. It catalyses the reaction N(6)-carboxybiotinyl-L-lysyl-[protein] + acetyl-CoA = N(6)-biotinyl-L-lysyl-[protein] + malonyl-CoA. Its pathway is lipid metabolism; malonyl-CoA biosynthesis; malonyl-CoA from acetyl-CoA: step 1/1. Functionally, component of the acetyl coenzyme A carboxylase (ACC) complex. First, biotin carboxylase catalyzes the carboxylation of biotin on its carrier protein (BCCP) and then the CO(2) group is transferred by the carboxyltransferase to acetyl-CoA to form malonyl-CoA. The polypeptide is Acetyl-coenzyme A carboxylase carboxyl transferase subunit alpha (Ralstonia nicotianae (strain ATCC BAA-1114 / GMI1000) (Ralstonia solanacearum)).